The chain runs to 157 residues: Cytochrome b6-f complex subunit 4 (157 aa).

Transmembrane regions (helical) follow at residues 35–55 (ILYI…GLGV), 94–114 (LVGV…AFIE), and 130–150 (LVYL…VLGI).

This sequence belongs to the cytochrome b family. PetD subfamily. In terms of assembly, the 4 large subunits of the cytochrome b6-f complex are cytochrome b6, subunit IV (17 kDa polypeptide, petD), cytochrome f and the Rieske protein, while the 4 small subunits are petG, petL, petM and petN. The complex functions as a dimer.

Its subcellular location is the plastid. It localises to the chloroplast thylakoid membrane. Functionally, component of the cytochrome b6-f complex, which mediates electron transfer between photosystem II (PSII) and photosystem I (PSI), cyclic electron flow around PSI, and state transitions. The protein is Cytochrome b6-f complex subunit 4 of Amphidinium carterae (Dinoflagellate).